We begin with the raw amino-acid sequence, 310 residues long: Pantothenate kinase (310 aa).

Residue 95 to 102 (GSVAVGKS) coordinates ATP.

This sequence belongs to the prokaryotic pantothenate kinase family.

Its subcellular location is the cytoplasm. The enzyme catalyses (R)-pantothenate + ATP = (R)-4'-phosphopantothenate + ADP + H(+). It functions in the pathway cofactor biosynthesis; coenzyme A biosynthesis; CoA from (R)-pantothenate: step 1/5. The polypeptide is Pantothenate kinase (Rhodococcus opacus (strain B4)).